The chain runs to 122 residues: uncharacterized protein (122 aa).

3 helical membrane-spanning segments follow: residues 21–40 (VWSW…SIAI), 57–77 (YTHM…CICI), and 94–114 (LLFS…YCIY).

Its subcellular location is the membrane. This is an uncharacterized protein from Saccharomyces cerevisiae (strain ATCC 204508 / S288c) (Baker's yeast).